A 165-amino-acid polypeptide reads, in one-letter code: Cytochrome b6-f complex subunit 4 (165 aa).

The next 3 helical transmembrane spans lie at 36–56, 95–115, and 131–151; these read LLYI…GLAV, LLGV…PFLE, and TVFL…TLPI.

The protein belongs to the cytochrome b family. PetD subfamily. In terms of assembly, the 4 large subunits of the cytochrome b6-f complex are cytochrome b6, subunit IV (17 kDa polypeptide, petD), cytochrome f and the Rieske protein, while the 4 small subunits are petG, petL, petM and petN. The complex functions as a dimer.

The protein localises to the plastid. The protein resides in the chloroplast thylakoid membrane. Component of the cytochrome b6-f complex, which mediates electron transfer between photosystem II (PSII) and photosystem I (PSI), cyclic electron flow around PSI, and state transitions. The chain is Cytochrome b6-f complex subunit 4 from Populus alba (White poplar).